The following is a 405-amino-acid chain: Cytochrome P450 130 (405 aa).

Substrate-binding residues include Asp-93 and His-97. Residues Arg-101, Gly-243, Arg-295, Tyr-318, Ser-348, His-352, and Cys-354 each coordinate heme.

It belongs to the cytochrome P450 family. Homodimer. The cofactor is heme.

The polypeptide is Cytochrome P450 130 (cyp130) (Mycobacterium tuberculosis (strain CDC 1551 / Oshkosh)).